The primary structure comprises 249 residues: tRNA pseudouridine synthase A (249 aa).

Residue aspartate 53 is the Nucleophile of the active site. A substrate-binding site is contributed by tyrosine 111.

The protein belongs to the tRNA pseudouridine synthase TruA family. As to quaternary structure, homodimer.

It catalyses the reaction uridine(38/39/40) in tRNA = pseudouridine(38/39/40) in tRNA. Formation of pseudouridine at positions 38, 39 and 40 in the anticodon stem and loop of transfer RNAs. This chain is tRNA pseudouridine synthase A, found in Streptococcus pneumoniae (strain P1031).